The sequence spans 521 residues: Ribonuclease Y (521 aa).

Residues 5 to 25 (LLLILTAVIMLIVGFAVGAIL) form a helical membrane-spanning segment. The segment at 77–107 (ELKDRRGEVQKQENRLIQREETMDRKDATLD) is disordered. In terms of domain architecture, KH spans 211–271 (TVTVVTLPND…IRREIARMTL (61 aa)). The HD domain occupies 337–430 (VLNHSIEVAK…VAASDAISAA (94 aa)).

Belongs to the RNase Y family.

The protein resides in the cell membrane. In terms of biological role, endoribonuclease that initiates mRNA decay. In Latilactobacillus sakei subsp. sakei (strain 23K) (Lactobacillus sakei subsp. sakei), this protein is Ribonuclease Y.